The following is a 666-amino-acid chain: Calmodulin-binding receptor kinase CaMRLK (666 aa).

Positions 1 to 17 (MFLKLFLLLSLVSFSHS) are cleaved as a signal peptide. Residues 18 to 297 (DSSSTVSCPN…KTHRTNHTPL (280 aa)) lie on the Extracellular side of the membrane. N-linked (GlcNAc...) asparagine glycans are attached at residues Asn27, Asn45, Asn52, Asn68, Asn78, Asn89, Asn110, Asn126, Asn137, Asn148, Asn154, Asn189, Asn212, Asn229, and Asn261. 7 LRR repeats span residues 79–103 (LTRL…LWSM), 105–127 (GLVS…PVNG), 130–152 (LSAV…FTGF), 153–177 (TNLT…SLSG), 178–197 (LRHL…PISG), 198–224 (LKSL…NLNH), and 226–246 (QFLN…KYRK). The chain crosses the membrane as a helical span at residues 298–318 (VIGLSSSLGALIIVIFAAAII). The segment at 319–337 (LIRRRMKSARTKSRWAISN) is calmodulin binding. Topologically, residues 319-666 (LIRRRMKSAR…LLKDIRTVSR (348 aa)) are cytoplasmic. The Protein kinase domain occupies 395–661 (FGTESVISDG…QQVLGLLKDI (267 aa)). ATP contacts are provided by residues 401–409 (ISDGTCGPL) and Lys423.

Belongs to the protein kinase superfamily. Ser/Thr protein kinase family. In terms of assembly, binds calmodulin (CaM) in a calcium-dependent manner. Interacts with CAM1, but not with CAM8. Requires Mn(2+) as cofactor. The cofactor is Mg(2+). Post-translationally, calmodulin (CaM)-independent autophosphorylation. Expressed in reproductive and vegetative tissues, with higher levels in seedlings and flowers, but not in leaves.

The protein localises to the cell membrane. It carries out the reaction L-seryl-[protein] + ATP = O-phospho-L-seryl-[protein] + ADP + H(+). The enzyme catalyses L-threonyl-[protein] + ATP = O-phospho-L-threonyl-[protein] + ADP + H(+). Not stimulated by calmodulin (CaM). Can phosphorylate the myelin basic protein in vitro. Required for endosperm development in embryos. Maybe involved in auxin and osmotic stress responses. This chain is Calmodulin-binding receptor kinase CaMRLK, found in Arabidopsis thaliana (Mouse-ear cress).